The sequence spans 455 residues: Ribulose bisphosphate carboxylase large chain (455 aa).

K5 carries the post-translational modification N6,N6,N6-trimethyllysine. Residues N114 and T164 each coordinate substrate. Catalysis depends on K166, which acts as the Proton acceptor. Residue K168 coordinates substrate. 3 residues coordinate Mg(2+): K192, D194, and E195. Position 192 is an N6-carboxylysine (K192). H285 (proton acceptor) is an active-site residue. Residues R286, H318, and S370 each coordinate substrate.

This sequence belongs to the RuBisCO large chain family. Type I subfamily. In terms of assembly, heterohexadecamer of 8 large chains and 8 small chains; disulfide-linked. The disulfide link is formed within the large subunit homodimers. Mg(2+) is required as a cofactor. Post-translationally, the disulfide bond which can form in the large chain dimeric partners within the hexadecamer appears to be associated with oxidative stress and protein turnover.

It localises to the plastid. The protein localises to the chloroplast. The enzyme catalyses 2 (2R)-3-phosphoglycerate + 2 H(+) = D-ribulose 1,5-bisphosphate + CO2 + H2O. It carries out the reaction D-ribulose 1,5-bisphosphate + O2 = 2-phosphoglycolate + (2R)-3-phosphoglycerate + 2 H(+). In terms of biological role, ruBisCO catalyzes two reactions: the carboxylation of D-ribulose 1,5-bisphosphate, the primary event in carbon dioxide fixation, as well as the oxidative fragmentation of the pentose substrate in the photorespiration process. Both reactions occur simultaneously and in competition at the same active site. This is Ribulose bisphosphate carboxylase large chain from Lupinus albus (White lupine).